The chain runs to 217 residues: Probable transaldolase (217 aa).

The active-site Schiff-base intermediate with substrate is the lysine 85.

It belongs to the transaldolase family. Type 3B subfamily.

The protein localises to the cytoplasm. It catalyses the reaction D-sedoheptulose 7-phosphate + D-glyceraldehyde 3-phosphate = D-erythrose 4-phosphate + beta-D-fructose 6-phosphate. It participates in carbohydrate degradation; pentose phosphate pathway; D-glyceraldehyde 3-phosphate and beta-D-fructose 6-phosphate from D-ribose 5-phosphate and D-xylulose 5-phosphate (non-oxidative stage): step 2/3. Functionally, transaldolase is important for the balance of metabolites in the pentose-phosphate pathway. This chain is Probable transaldolase, found in Agathobacter rectalis (strain ATCC 33656 / DSM 3377 / JCM 17463 / KCTC 5835 / VPI 0990) (Eubacterium rectale).